A 413-amino-acid polypeptide reads, in one-letter code: MKNKRRTYFFQFAVLAVVIATAYFAWNYFKASTISEEKSAQASKSLQDLKYLLQPPVQVATAKIQSVPHYLGGLGTVQAANTVTVTSLVAGQLTALHFDEGQFVKQGDLLAEIDPRSFQIQLAKVQGQYAKDQATLANSRQDLVRYQQLAKNKSISQQDLDKQISTVRQYEALLKADQSSIDDARLQLTYSRITAPISGRVGLKKIDVGNYISAGGGTPLVIITQVDPIDVLFALPENDISAVLKAQKNNKDVVVTAWDRNNQQQLAQGKLLSIDNLIDVTTGTIKMKARFDNQNNVLFPNQFVNIQIKVNTLENAIVIPNAALQMSSEGHYVWKVDKENKVNKRKVTIGLQNAQLVVISKGLATGDRVVTDGTDALTEGTGITIVKPLKSESANTYDQMDKSKPSNSKVENT.

A signal peptide spans 1 to 25; that stretch reads MKNKRRTYFFQFAVLAVVIATAYFA. The interval 394–413 is disordered; that stretch reads ANTYDQMDKSKPSNSKVENT.

It belongs to the membrane fusion protein (MFP) (TC 8.A.1) family. In terms of assembly, part of a tripartite efflux system composed of MdtA, MdtB and MdtC.

The protein resides in the cell inner membrane. The polypeptide is Multidrug resistance protein MdtA (Xenorhabdus bovienii (strain SS-2004) (Xenorhabdus nematophila subsp. bovienii)).